Consider the following 354-residue polypeptide: Rhodopsin (354 aa).

Residues 1 to 36 (MNGTEGPYFYIPMLNTTGVVRSPYEYPQYYLVNPAA) are Extracellular-facing. N-linked (GlcNAc...) asparagine glycans are attached at residues N2 and N15. Residues 37-61 (YAVLGAYMFFLILVGFPINFLTLYV) form a helical membrane-spanning segment. The Cytoplasmic segment spans residues 62-73 (TIEHKKLRTPLN). A helical membrane pass occupies residues 74-96 (YILLNLAVADLFMVFGGFTTTIY). Residues 97-110 (TSMHGYFVLGRLGC) lie on the Extracellular side of the membrane. C110 and C187 are joined by a disulfide. A helical transmembrane segment spans residues 111-133 (NVEGFSATLGGEIALWSLVVLAI). The 'Ionic lock' involved in activated form stabilization signature appears at 134-136 (ERW). The Cytoplasmic segment spans residues 134-152 (ERWVVVCKPISNFRFGENH). Residues 153 to 173 (AIMGVAFTWFMAAACAVPPLF) traverse the membrane as a helical segment. Residues 174 to 202 (GWSRYIPEGMQCSCGIDYYTRAEGFNNES) are Extracellular-facing. An N-linked (GlcNAc...) asparagine glycan is attached at N200. A helical transmembrane segment spans residues 203 to 224 (FVIYMFTCHFCIPLMVVFFCYG). The Cytoplasmic portion of the chain corresponds to 225–252 (RLVCAVKEAAAAQQESETTQRAEREVTR). Residues 253 to 274 (MVIIMVVSFLVSWVPYASVAWY) form a helical membrane-spanning segment. At 275-286 (IFTHQGSEFGPL) the chain is on the extracellular side. The helical transmembrane segment at 287 to 308 (FMTIPAFFAKSSSIYNPMIYIC) threads the bilayer. Residue K296 is modified to N6-(retinylidene)lysine. Residues 309 to 354 (MNKQFRHCMITTLCCGKNPFEEEEGASSTASKTEASSVSSSSVSPA) are Cytoplasmic-facing. S-palmitoyl cysteine attachment occurs at residues C322 and C323. A disordered region spans residues 329–354 (EEEEGASSTASKTEASSVSSSSVSPA). Over residues 334–354 (ASSTASKTEASSVSSSSVSPA) the composition is skewed to low complexity.

Belongs to the G-protein coupled receptor 1 family. Opsin subfamily. In terms of processing, phosphorylated on some or all of the serine and threonine residues present in the C-terminal region. Post-translationally, contains one covalently linked retinal chromophore.

The protein localises to the membrane. It localises to the cell projection. The protein resides in the cilium. Its subcellular location is the photoreceptor outer segment. Functionally, photoreceptor required for image-forming vision at low light intensity. While most salt water fish species use retinal as chromophore, most freshwater fish use 3-dehydroretinal, or a mixture of retinal and 3-dehydroretinal. Light-induced isomerization of 11-cis to all-trans retinal triggers a conformational change that activates signaling via G-proteins. Subsequent receptor phosphorylation mediates displacement of the bound G-protein alpha subunit by arrestin and terminates signaling. The chain is Rhodopsin (rho) from Atherina boyeri (Big-scale sand smelt).